We begin with the raw amino-acid sequence, 111 residues long: Phosphoribosyl-ATP pyrophosphatase (111 aa).

This sequence belongs to the PRA-PH family.

Its subcellular location is the cytoplasm. The catalysed reaction is 1-(5-phospho-beta-D-ribosyl)-ATP + H2O = 1-(5-phospho-beta-D-ribosyl)-5'-AMP + diphosphate + H(+). Its pathway is amino-acid biosynthesis; L-histidine biosynthesis; L-histidine from 5-phospho-alpha-D-ribose 1-diphosphate: step 2/9. The chain is Phosphoribosyl-ATP pyrophosphatase from Alcanivorax borkumensis (strain ATCC 700651 / DSM 11573 / NCIMB 13689 / SK2).